The chain runs to 130 residues: Large ribosomal subunit protein bL17 (130 aa).

It belongs to the bacterial ribosomal protein bL17 family. Part of the 50S ribosomal subunit. Contacts protein L32.

The polypeptide is Large ribosomal subunit protein bL17 (Nitrosomonas eutropha (strain DSM 101675 / C91 / Nm57)).